Reading from the N-terminus, the 211-residue chain is Cytochrome c biogenesis ATP-binding export protein CcmA (211 aa).

The 193-residue stretch at 17-209 folds into the ABC transporter domain; that stretch reads LDVEDVTVFR…PSLAHVESFW (193 aa). Position 49 to 56 (49 to 56) interacts with ATP; it reads GPNGAGKS.

The protein belongs to the ABC transporter superfamily. CcmA exporter (TC 3.A.1.107) family. In terms of assembly, the complex is composed of two ATP-binding proteins (CcmA) and two transmembrane proteins (CcmB).

The protein resides in the cell inner membrane. The enzyme catalyses heme b(in) + ATP + H2O = heme b(out) + ADP + phosphate + H(+). Functionally, part of the ABC transporter complex CcmAB involved in the biogenesis of c-type cytochromes; once thought to export heme, this seems not to be the case, but its exact role is uncertain. Responsible for energy coupling to the transport system. The sequence is that of Cytochrome c biogenesis ATP-binding export protein CcmA from Gluconobacter oxydans (strain 621H) (Gluconobacter suboxydans).